Here is a 121-residue protein sequence, read N- to C-terminus: Large ribosomal subunit protein bL12 (121 aa).

The protein belongs to the bacterial ribosomal protein bL12 family. Homodimer. Part of the ribosomal stalk of the 50S ribosomal subunit. Forms a multimeric L10(L12)X complex, where L10 forms an elongated spine to which 2 to 4 L12 dimers bind in a sequential fashion. Binds GTP-bound translation factors.

Functionally, forms part of the ribosomal stalk which helps the ribosome interact with GTP-bound translation factors. Is thus essential for accurate translation. The protein is Large ribosomal subunit protein bL12 of Pectobacterium carotovorum subsp. carotovorum (strain PC1).